The primary structure comprises 359 residues: Proton-coupled zinc antiporter SLC30A2 (359 aa).

Over 1–56 (MASRSFFGALWKSEASRIPPVNLPSVELAVQSNHYCHAQKDSGSHPNSEKQRARRK) the chain is Cytoplasmic. The short motif at 34–37 (HYCH) is the Mitochondrial localization signal element. Residue cysteine 36 coordinates Zn(2+). A helical transmembrane segment spans residues 57–77 (LYVASAICLVFMIGEIIGGYL). The Lumenal segment spans residues 78–86 (AQSLAIMTD). Residues 87-107 (AAHLLTDFASMLISLFSLWVS) traverse the membrane as a helical segment. 2 residues coordinate Zn(2+): histidine 89 and aspartate 93. Over 108-123 (SRPATKTMNFGWQRAE) the chain is Cytoplasmic. Residues 124 to 144 (ILGALLSVLSIWVVTGVLVYL) traverse the membrane as a helical segment. Topologically, residues 145–159 (AVQRLISGDYEIKGD) are lumenal. A helical membrane pass occupies residues 160–180 (TMLITSGCAVAVNIIMGLALH). Residues 181–207 (QSGHGHSHGHSHEDSSQQQQNPSVRAA) are Cytoplasmic-facing. A helical membrane pass occupies residues 208–228 (FIHVVGDLLQSVGVLVAAYII). 2 residues coordinate Zn(2+): histidine 210 and aspartate 214. Residues 229 to 236 (YFKPEYKY) lie on the Lumenal side of the membrane. Residues 237 to 257 (VDPICTFLFSILVLGTTLTIL) form a helical membrane-spanning segment. Over 258–291 (RDVILVLMEGTPKGVDFTTVKNLLLSVDGVEALH) the chain is Cytoplasmic. Residues 281-282 (LL) carry the Lysosomal targeting motif motif. Residue serine 283 is modified to Phosphoserine. Histidine 291, histidine 308, and glutamate 342 together coordinate Zn(2+). Residues 292-312 (SLHIWALTVAQPVLSVHIAIA) traverse the membrane as a helical segment. Residues 313–359 (QNVDAQAVLKVARDRLQGKFNFHTMTIQIESYSEDMKSCQECQGPSE) lie on the Lumenal side of the membrane.

This sequence belongs to the cation diffusion facilitator (CDF) transporter (TC 2.A.4) family. SLC30A subfamily. As to quaternary structure, homodimer. Interacts (via lysosomal targeting motif) with AP3D1; in AP-3-mediated transport to lysosomes. Interacts with TMEM163. Phosphorylated at Ser-283. Phosphorylation at Ser-283 prevents localization to lysosomes. Dephosphorylation of Ser-283 which triggers localization to lysosomes, accumulation of zinc into lysosomes and lysosomal-mediated cell death is induced by TNF-alpha. Detected in intestine, kidney, seminal vesicles and testis.

It localises to the cytoplasmic vesicle. It is found in the secretory vesicle membrane. The protein localises to the zymogen granule membrane. The protein resides in the endosome membrane. Its subcellular location is the lysosome membrane. It localises to the mitochondrion inner membrane. It carries out the reaction Zn(2+)(in) + 2 H(+)(out) = Zn(2+)(out) + 2 H(+)(in). Electroneutral proton-coupled antiporter concentrating zinc ions into a variety of intracellular organelles including endosomes, zymogen granules and mitochondria. Thereby, plays a crucial role in cellular zinc homeostasis to confer upon cells protection against its potential cytotoxicity. Regulates the zinc concentration of milk, through the transport of zinc ions into secretory vesicles of mammary cells. By concentrating zinc ions into lysosomes participates to lysosomal-mediated cell death during early mammary gland involution. The protein is Proton-coupled zinc antiporter SLC30A2 of Rattus norvegicus (Rat).